A 407-amino-acid polypeptide reads, in one-letter code: Protoasukamycin 4-monooxygenase (407 aa).

As to quaternary structure, does not interact with AsuE2, suggesting a possible transient interaction between the two enzymes instead of formation of a stable complex. FMN serves as cofactor. It depends on FAD as a cofactor. Requires riboflavin as cofactor.

It carries out the reaction protoasukamycin + NADH + O2 + H(+) = 4-hydroxyprotoasukamycin + NAD(+) + H2O. It functions in the pathway antibiotic biosynthesis. With respect to regulation, when flavin concentration is low, activity is enhanced by the presence of the NADH-dependent flavin reductase AsuE2. In the presence of abundant flavin, activity of AsuE1 is not affected by AsuE2. In terms of biological role, involved in the biosynthesis of the antibiotic asukamycin. Catalyzes the conversion of protoasukamycin to 4-hydroxyprotoasukamycin. Can also convert some protoasukamycin derivatives into their corresponding 4-hydroxyprotoasukamycin derivatives. Can also use NADPH, but catalytic efficiency is 50-fold higher with NADH. In Streptomyces nodosus subsp. asukaensis, this protein is Protoasukamycin 4-monooxygenase.